The primary structure comprises 156 residues: Keratin-associated protein 13-4 (156 aa).

4 consecutive repeat copies span residues 37–46 (CQLGSSLYRN), 47–56 (CQKTCWEPTS), 57–66 (CRKSCYRRRT), and 73–82 (CQTTCSRSLG). The segment at 37 to 82 (CQLGSSLYRNCQKTCWEPTSCRKSCYRRRTSMLCSPCQTTCSRSLG) is 4 X 10 AA approximate repeats.

It belongs to the PMG family. Interacts with hair keratins.

Its function is as follows. In the hair cortex, hair keratin intermediate filaments are embedded in an interfilamentous matrix, consisting of hair keratin-associated proteins (KRTAP), which are essential for the formation of a rigid and resistant hair shaft through their extensive disulfide bond cross-linking with abundant cysteine residues of hair keratins. The matrix proteins include the high-sulfur and high-glycine-tyrosine keratins. The sequence is that of Keratin-associated protein 13-4 (KRTAP13-4) from Macaca fascicularis (Crab-eating macaque).